Here is a 293-residue protein sequence, read N- to C-terminus: RNA pseudouridylate synthase domain-containing protein 1 (293 aa).

Asp67 is an active-site residue.

Belongs to the pseudouridine synthase RluA family.

The polypeptide is RNA pseudouridylate synthase domain-containing protein 1 (rpusd1) (Danio rerio (Zebrafish)).